The sequence spans 348 residues: Glycerol-1-phosphate dehydrogenase [NAD(P)+] (348 aa).

Residues 94–98 and 116–119 contribute to the NAD(+) site; these read GKVID and TTAS. Substrate is bound at residue D121. S125 lines the NAD(+) pocket. D168 contacts substrate. D168 and H248 together coordinate Zn(2+). H252 is a substrate binding site. H264 is a Zn(2+) binding site.

This sequence belongs to the glycerol-1-phosphate dehydrogenase family. Homooctamer. It depends on Zn(2+) as a cofactor.

The protein resides in the cytoplasm. It catalyses the reaction sn-glycerol 1-phosphate + NAD(+) = dihydroxyacetone phosphate + NADH + H(+). The catalysed reaction is sn-glycerol 1-phosphate + NADP(+) = dihydroxyacetone phosphate + NADPH + H(+). The protein operates within membrane lipid metabolism; glycerophospholipid metabolism. Functionally, catalyzes the NAD(P)H-dependent reduction of dihydroxyacetonephosphate (DHAP or glycerone phosphate) to glycerol 1-phosphate (G1P). The G1P thus generated is used as the glycerophosphate backbone of phospholipids in the cellular membranes of Archaea. This chain is Glycerol-1-phosphate dehydrogenase [NAD(P)+], found in Methanobrevibacter smithii (strain ATCC 35061 / DSM 861 / OCM 144 / PS).